A 469-amino-acid chain; its full sequence is Phosphatidylinositol 4-kinase type 2-alpha (469 aa).

Disordered regions lie at residues 1-30 (MDETSPLVSPDRDQTEYSYQSQCSPGATVP) and 50-72 (TATSCGSAASGPSPPGSPCDQER). The span at 16 to 25 (EYSYQSQCSP) shows a compositional bias: polar residues. The segment covering 50 to 60 (TATSCGSAASG) has biased composition (low complexity). The PI3K/PI4K catalytic domain occupies 115 to 443 (DILPERISQG…VQTPPVIVET (329 aa)). The segment at 121 to 127 (ISQGSSG) is G-loop. ATP is bound by residues 122-128 (SQGSSGS) and Lys-143. The important for substrate binding stretch occupies residues 148–150 (EPY). The tract at residues 156–169 (KWTKWLQKLCCPCC) is important for interaction with membranes. S-palmitoyl cysteine attachment occurs at residues Cys-165, Cys-166, Cys-168, and Cys-169. ATP is bound at residue 252–255 (QIFV). The tract at residues 259–267 (KDADYWLRR) is important for interaction with membranes. The interval 296-304 (RNTDRGNDN) is catalytic loop. The interval 334 to 354 (AIDNGLAFPLKHPDSWRAYPF) is activation loop. Asp-336 contributes to the ATP binding site. The tract at residues 349 to 358 (WRAYPFYWAW) is important for interaction with membranes.

Belongs to the PI3/PI4-kinase family. Type II PI4K subfamily.

The protein resides in the golgi apparatus. Its subcellular location is the trans-Golgi network membrane. It is found in the membrane raft. The protein localises to the endosome. It localises to the endosome membrane. The protein resides in the cytoplasmic vesicle. Its subcellular location is the cell projection. It is found in the dendrite. The protein localises to the presynaptic cell membrane. It localises to the synapse. The protein resides in the synaptosome. Its subcellular location is the mitochondrion. It is found in the membrane. The protein localises to the cell membrane. It localises to the perikaryon. The protein resides in the neuron projection. It carries out the reaction a 1,2-diacyl-sn-glycero-3-phospho-(1D-myo-inositol) + ATP = a 1,2-diacyl-sn-glycero-3-phospho-(1D-myo-inositol 4-phosphate) + ADP + H(+). In terms of biological role, membrane-bound phosphatidylinositol-4 kinase (PI4-kinase) that catalyzes the phosphorylation of phosphatidylinositol (PI) to phosphatidylinositol 4-phosphate (PI4P), a lipid that plays important roles in endocytosis, Golgi function, protein sorting and membrane trafficking. Besides, phosphorylation of phosphatidylinositol (PI) to phosphatidylinositol 4-phosphate (PI4P) is the first committed step in the generation of phosphatidylinositol 4,5-bisphosphate (PIP2), a precursor of the second messenger inositol 1,4,5-trisphosphate (InsP3). In Xenopus laevis (African clawed frog), this protein is Phosphatidylinositol 4-kinase type 2-alpha (pi4k2a).